The primary structure comprises 482 residues: tRNA sulfurtransferase (482 aa).

The THUMP domain maps to 61–165 (LAIRDALTRI…DDRLLLIKGR (105 aa)). Residues 183-184 (LI), Lys-265, Gly-287, and Gln-296 contribute to the ATP site. An intrachain disulfide couples Cys-344 to Cys-456. Residues 404–482 (FGPNDVILDI…GFNNVKVYRP (79 aa)) form the Rhodanese domain. Cys-456 acts as the Cysteine persulfide intermediate in catalysis.

It belongs to the ThiI family.

It is found in the cytoplasm. It carries out the reaction [ThiI sulfur-carrier protein]-S-sulfanyl-L-cysteine + a uridine in tRNA + 2 reduced [2Fe-2S]-[ferredoxin] + ATP + H(+) = [ThiI sulfur-carrier protein]-L-cysteine + a 4-thiouridine in tRNA + 2 oxidized [2Fe-2S]-[ferredoxin] + AMP + diphosphate. It catalyses the reaction [ThiS sulfur-carrier protein]-C-terminal Gly-Gly-AMP + S-sulfanyl-L-cysteinyl-[cysteine desulfurase] + AH2 = [ThiS sulfur-carrier protein]-C-terminal-Gly-aminoethanethioate + L-cysteinyl-[cysteine desulfurase] + A + AMP + 2 H(+). It participates in cofactor biosynthesis; thiamine diphosphate biosynthesis. In terms of biological role, catalyzes the ATP-dependent transfer of a sulfur to tRNA to produce 4-thiouridine in position 8 of tRNAs, which functions as a near-UV photosensor. Also catalyzes the transfer of sulfur to the sulfur carrier protein ThiS, forming ThiS-thiocarboxylate. This is a step in the synthesis of thiazole, in the thiamine biosynthesis pathway. The sulfur is donated as persulfide by IscS. This is tRNA sulfurtransferase from Escherichia coli O127:H6 (strain E2348/69 / EPEC).